The primary structure comprises 189 residues: NADH-quinone oxidoreductase subunit B (189 aa).

Residues Cys39, Cys40, Cys104, and Cys135 each contribute to the [4Fe-4S] cluster site.

The protein belongs to the complex I 20 kDa subunit family. In terms of assembly, NDH-1 is composed of 14 different subunits. Subunits NuoB, C, D, E, F, and G constitute the peripheral sector of the complex. Requires [4Fe-4S] cluster as cofactor.

It localises to the cell inner membrane. It catalyses the reaction a quinone + NADH + 5 H(+)(in) = a quinol + NAD(+) + 4 H(+)(out). NDH-1 shuttles electrons from NADH, via FMN and iron-sulfur (Fe-S) centers, to quinones in the respiratory chain. The immediate electron acceptor for the enzyme in this species is believed to be a menaquinone. Couples the redox reaction to proton translocation (for every two electrons transferred, four hydrogen ions are translocated across the cytoplasmic membrane), and thus conserves the redox energy in a proton gradient. The chain is NADH-quinone oxidoreductase subunit B from Chlorobium phaeovibrioides (strain DSM 265 / 1930) (Prosthecochloris vibrioformis (strain DSM 265)).